A 259-amino-acid polypeptide reads, in one-letter code: Polycomb group RING finger protein 1 (259 aa).

N-acetylalanine is present on A2. A Phosphoserine modification is found at S3. K24 is covalently cross-linked (Glycyl lysine isopeptide (Lys-Gly) (interchain with G-Cter in SUMO2)). The RING-type zinc finger occupies 47-86 (CCLCAGYFVDATTITECLHTFCKSCIVKYLQTSKYCPMCN). Positions 86 to 247 (NIKIHETQPL…LSHWFGKPSP (162 aa)) are necessary for repressor activity. A Glycyl lysine isopeptide (Lys-Gly) (interchain with G-Cter in SUMO2) cross-link involves residue K88. The interval 150-255 (LPFSSFDHSK…SPLLLQYSVK (106 aa)) is required for the interaction with the KDM2B-SKP1 heterodimeric complex. Residues 167–255 (EQLSLCLERL…SPLLLQYSVK (89 aa)) form an RING-finger and WD40-associated ubiquitin-like domain (RAWUL); sufficient for interaction with BCOR and BCORL1 region.

As to quaternary structure, interacts with BCORL1, forming heterodimers. The PCGF1-BCORL1 heterodimeric complex interacts with the KDM2B-SKP1 heterodimeric complex to form a homotetrameric polycomb repression complex 1 (PRC1.1). Component of the repressive BCOR complex containing a Polycomb group subcomplex at least composed of RYBP, RING1 and RNF2/RING2. Specifically interacts with BCOR, RING1 and RNF2/RING2. Component of a PRC1-like complex. Interacts with CBX6, CBX7 and CBX8. Interacts with DPPA4, NANOG, POU5F1 and RYBP.

The protein resides in the nucleus. Functionally, component of the Polycomb group (PcG) multiprotein BCOR complex, a complex required to maintain the transcriptionally repressive state of some genes, such as BCL6 and the cyclin-dependent kinase inhibitor, CDKN1A. Transcriptional repressor that may be targeted to the DNA by BCL6; this transcription repressor activity may be related to PKC signaling pathway. Represses CDKN1A expression by binding to its promoter, and this repression is dependent on the retinoic acid response element (RARE element). Promotes cell cycle progression and enhances cell proliferation as well. May have a positive role in tumor cell growth by down-regulating CDKN1A. Component of a Polycomb group (PcG) multiprotein PRC1-like complex, a complex class required to maintain the transcriptionally repressive state of many genes, including Hox genes, throughout development. PcG PRC1 complex acts via chromatin remodeling and modification of histones; it mediates monoubiquitination of histone H2A 'Lys-119', rendering chromatin heritably changed in its expressibility. Within the PRC1-like complex, regulates RNF2 ubiquitin ligase activity. Regulates the expression of DPPA4 and NANOG in the NT2 embryonic carcinoma cells. The sequence is that of Polycomb group RING finger protein 1 (PCGF1) from Bos taurus (Bovine).